A 223-amino-acid polypeptide reads, in one-letter code: MGQKVHPYGFRLGYTKPWKSRWFIERDYDKLLLEDVKLKAELKEKLKSAGVSSIEVERPGNKLRIIIRTARPGIIIGRKGAEIDKLKGELQKRTNREVYIDIQEVHKPELDAQLVAESIALQLEKRVGFRRAMRKSVDSALRFGCKGIKVRVSGRLNGNEIARSEWYLQGRLPLHTLRADIDYGFAEARTTYGVIGVKAWVYKGEILPAAKKREPQVATAGNF.

The KH type-2 domain maps to 38-106; sequence LKAELKEKLK…EVYIDIQEVH (69 aa).

Belongs to the universal ribosomal protein uS3 family. Part of the 30S ribosomal subunit. Forms a tight complex with proteins S10 and S14.

Its function is as follows. Binds the lower part of the 30S subunit head. Binds mRNA in the 70S ribosome, positioning it for translation. This Koribacter versatilis (strain Ellin345) protein is Small ribosomal subunit protein uS3.